Here is a 228-residue protein sequence, read N- to C-terminus: Somatolactin (228 aa).

The signal sequence occupies residues 1–24 (MFSIRMNKVLQGFVCLMLTHRIVG). Intrachain disulfides connect Cys-29/Cys-38, Cys-88/Cys-200, and Cys-217/Cys-225. 2 N-linked (GlcNAc...) asparagine glycosylation sites follow: Asn-141 and Asn-177.

Belongs to the somatotropin/prolactin family.

Its subcellular location is the secreted. This is Somatolactin from Anguilla anguilla (European freshwater eel).